Reading from the N-terminus, the 148-residue chain is Putative FAD-linked sulfhydryl oxidase 096R (148 aa).

The ERV/ALR sulfhydryl oxidase domain occupies 1 to 103 (MSIDPKLWGN…LAAKTVFQRY (103 aa)). Cysteine 48 and cysteine 51 are joined by a disulfide. A helical transmembrane segment spans residues 122 to 142 (WSPWLTTALAVILVVVVAGIG).

The protein belongs to the IIV-6 347L family. FAD is required as a cofactor.

It localises to the membrane. It catalyses the reaction 2 R'C(R)SH + O2 = R'C(R)S-S(R)CR' + H2O2. Its function is as follows. FAD-dependent sulfhydryl oxidase that catalyzes disulfide bond formation. The polypeptide is Putative FAD-linked sulfhydryl oxidase 096R (Aedes vexans (Inland floodwater mosquito)).